A 245-amino-acid chain; its full sequence is U11/U12 small nuclear ribonucleoprotein 35 kDa protein (245 aa).

The 79-residue stretch at 51–129 folds into the RRM domain; that stretch reads LTLFVARLNL…HEIFVDYELE (79 aa). Over residues 146 to 162 the composition is skewed to basic and acidic residues; the sequence is GKKESGQLRFGGRDRPF. The tract at residues 146-165 is disordered; that stretch reads GKKESGQLRFGGRDRPFRKP. Residue Lys172 forms a Glycyl lysine isopeptide (Lys-Gly) (interchain with G-Cter in SUMO2) linkage. Residues 173–222 are disordered; that stretch reads NDQFREGKRERRERSRSRERHWDSRMRDHHDRGREKRWQEREPARAWPEG. Basic and acidic residues-rich tracts occupy residues 174-185 and 192-216; these read DQFREGKRERRE and RHWD…REPA.

In terms of assembly, component of the U11/U12 snRNPs that are part of the U12-type spliceosome.

The protein localises to the nucleus. The polypeptide is U11/U12 small nuclear ribonucleoprotein 35 kDa protein (SNRNP35) (Bos taurus (Bovine)).